We begin with the raw amino-acid sequence, 110 residues long: V-type proton ATPase subunit G1 (110 aa).

Methionine 1 is modified (N-acetylmethionine). The interval 60–80 (KLEETSGDSGANVKRLEQETD) is disordered.

This sequence belongs to the V-ATPase G subunit family. V-ATPase is a heteromultimeric enzyme composed of a peripheral catalytic V1 complex (components A to H) attached to an integral membrane V0 proton pore complex (components: a, c, c'', d and e).

It is found in the cell membrane. It localises to the vacuole membrane. In terms of biological role, catalytic subunit of the peripheral V1 complex of vacuolar ATPase (V-ATPase). V-ATPase is responsible for acidifying a variety of intracellular compartments in eukaryotic cells. The polypeptide is V-type proton ATPase subunit G1 (VHA-G1) (Arabidopsis thaliana (Mouse-ear cress)).